We begin with the raw amino-acid sequence, 154 residues long: 6,7-dimethyl-8-ribityllumazine synthase (154 aa).

5-amino-6-(D-ribitylamino)uracil-binding positions include Phe21, 55–57 (AFE), and 79–81 (CVI). Residue 84–85 (AT) coordinates (2S)-2-hydroxy-3-oxobutyl phosphate. Residue His87 is the Proton donor of the active site. Residue Phe112 participates in 5-amino-6-(D-ribitylamino)uracil binding. Arg126 lines the (2S)-2-hydroxy-3-oxobutyl phosphate pocket.

It belongs to the DMRL synthase family. As to quaternary structure, forms an icosahedral capsid composed of 60 subunits, arranged as a dodecamer of pentamers.

The catalysed reaction is (2S)-2-hydroxy-3-oxobutyl phosphate + 5-amino-6-(D-ribitylamino)uracil = 6,7-dimethyl-8-(1-D-ribityl)lumazine + phosphate + 2 H2O + H(+). It functions in the pathway cofactor biosynthesis; riboflavin biosynthesis; riboflavin from 2-hydroxy-3-oxobutyl phosphate and 5-amino-6-(D-ribitylamino)uracil: step 1/2. In terms of biological role, catalyzes the formation of 6,7-dimethyl-8-ribityllumazine by condensation of 5-amino-6-(D-ribitylamino)uracil with 3,4-dihydroxy-2-butanone 4-phosphate. This is the penultimate step in the biosynthesis of riboflavin. The protein is 6,7-dimethyl-8-ribityllumazine synthase of Staphylococcus aureus (strain Mu50 / ATCC 700699).